Here is an 830-residue protein sequence, read N- to C-terminus: WD repeat-containing protein 75 (830 aa).

WD repeat units follow at residues 4-42 (EGVR…KVYS), 46-85 (EECV…KLWD), 89-130 (GILI…QLVS), 144-183 (RQLT…YFFK), 192-230 (LPST…RLWR), 236-275 (QKYT…VEWR), 278-317 (SEKN…TVIH), 323-361 (SAVI…QFYS), and 375-422 (QQEY…KLWN). Residue Lys426 forms a Glycyl lysine isopeptide (Lys-Gly) (interchain with G-Cter in SUMO2) linkage. WD repeat units follow at residues 429–473 (GFVL…KVWI), 486–524 (AWTC…TIWD), 528–568 (WELK…CCWN), and 573–610 (SIQW…FVFK). A phosphoserine mark is found at Ser663 and Ser671. Lys675 is covalently cross-linked (Glycyl lysine isopeptide (Lys-Gly) (interchain with G-Cter in SUMO2)). The disordered stretch occupies residues 761–807 (KSAEEVPDDVDMEGNKESDDSDEEYDLTEKDKETNNNTDLGEDAIHQ). Phosphoserine occurs at positions 778 and 781. A Phosphotyrosine modification is found at Tyr785. At Ser811 the chain carries Phosphoserine.

In terms of assembly, component of the proposed t-UTP subcomplex of the ribosomal small subunit (SSU) processome. SSU processome is composed of more than 70 proteins and the RNA chaperone small nucleolar RNA (snoRNA) U3.

It is found in the nucleus. Its subcellular location is the nucleolus. In terms of biological role, ribosome biogenesis factor. Part of the small subunit (SSU) processome, first precursor of the small eukaryotic ribosomal subunit. During the assembly of the SSU processome in the nucleolus, many ribosome biogenesis factors, an RNA chaperone and ribosomal proteins associate with the nascent pre-rRNA and work in concert to generate RNA folding, modifications, rearrangements and cleavage as well as targeted degradation of pre-ribosomal RNA by the RNA exosome. Involved in nucleolar processing of pre-18S ribosomal RNA. Required for optimal pre-ribosomal RNA transcription by RNA polymerase I. The polypeptide is WD repeat-containing protein 75 (Wdr75) (Mus musculus (Mouse)).